The chain runs to 179 residues: Shikimate kinase (179 aa).

Position 11 to 16 (11 to 16 (GAGKTT)) interacts with ATP. Thr15 contacts Mg(2+). Asp33, Arg57, and Gly79 together coordinate substrate. Arg118 serves as a coordination point for ATP. Arg140 lines the substrate pocket.

This sequence belongs to the shikimate kinase family. As to quaternary structure, monomer. Mg(2+) is required as a cofactor.

It is found in the cytoplasm. The enzyme catalyses shikimate + ATP = 3-phosphoshikimate + ADP + H(+). It functions in the pathway metabolic intermediate biosynthesis; chorismate biosynthesis; chorismate from D-erythrose 4-phosphate and phosphoenolpyruvate: step 5/7. In terms of biological role, catalyzes the specific phosphorylation of the 3-hydroxyl group of shikimic acid using ATP as a cosubstrate. This chain is Shikimate kinase, found in Bacteroides fragilis (strain ATCC 25285 / DSM 2151 / CCUG 4856 / JCM 11019 / LMG 10263 / NCTC 9343 / Onslow / VPI 2553 / EN-2).